We begin with the raw amino-acid sequence, 503 residues long: Maturase K (503 aa).

The protein belongs to the intron maturase 2 family. MatK subfamily.

Its subcellular location is the plastid. The protein localises to the chloroplast. Its function is as follows. Usually encoded in the trnK tRNA gene intron. Probably assists in splicing its own and other chloroplast group II introns. This Lathyrus vestitus (Pacific pea) protein is Maturase K.